The following is a 166-amino-acid chain: Succinate dehydrogenase [ubiquinone] cytochrome b small subunit, mitochondrial (166 aa).

The Mitochondrial matrix segment spans residues 1–65; that stretch reads MASVARSSAL…VPPPSPSHGS (65 aa). Residues 66-87 form a helical membrane-spanning segment; that stretch reads YHWTFDRVVAAGLIPLTVAPFA. The Mitochondrial intermembrane segment spans residues 88 to 94; that stretch reads AGSLNPT. Residues 95–115 traverse the membrane as a helical segment; sequence MDAVLAATILIHSHTGFGNII. Histidine 106 lines the heme pocket. Topologically, residues 116 to 124 are mitochondrial matrix; the sequence is VDYVPSKRV. Tyrosine 118 contributes to the a ubiquinone binding site. A helical membrane pass occupies residues 125 to 149; sequence PKARKVFTWGLNAATVLVGLALYEF. Over 150–166 the chain is Mitochondrial intermembrane; it reads ETTDVGLTETIKRVWKA.

It belongs to the CybS family. As to quaternary structure, forms part of complex II containing four subunits: a flavoprotein (FP), an iron-sulfur protein (IP) and a cytochrome b composed of a large and a small subunit.

The protein localises to the mitochondrion inner membrane. It functions in the pathway carbohydrate metabolism; tricarboxylic acid cycle. Its function is as follows. Membrane-anchoring subunit of succinate dehydrogenase (SDH) that is involved in complex II of the mitochondrial electron transport chain and is responsible for transferring electrons from succinate to ubiquinone (coenzyme Q). The sequence is that of Succinate dehydrogenase [ubiquinone] cytochrome b small subunit, mitochondrial from Neurospora crassa (strain ATCC 24698 / 74-OR23-1A / CBS 708.71 / DSM 1257 / FGSC 987).